A 299-amino-acid chain; its full sequence is GTPase Era (299 aa).

The Era-type G domain maps to 9–177 (RSGSVAVIGR…VGDLLKLVPE (169 aa)). The G1 stretch occupies residues 17-24 (GRPNVGKS). Residue 17-24 (GRPNVGKS) participates in GTP binding. A G2 region spans residues 43 to 47 (QTTRH). Positions 64-67 (DTPG) are G3. GTP-binding positions include 64–68 (DTPGL) and 126–129 (NKVD). The segment at 126–129 (NKVD) is G4. The interval 156–158 (VSA) is G5. In terms of domain architecture, KH type-2 spans 200–284 (VREQLMRQLG…FLETWVRVRE (85 aa)).

The protein belongs to the TRAFAC class TrmE-Era-EngA-EngB-Septin-like GTPase superfamily. Era GTPase family. Monomer.

Its subcellular location is the cytoplasm. It localises to the cell inner membrane. Functionally, an essential GTPase that binds both GDP and GTP, with rapid nucleotide exchange. Plays a role in 16S rRNA processing and 30S ribosomal subunit biogenesis and possibly also in cell cycle regulation and energy metabolism. This chain is GTPase Era, found in Xanthomonas oryzae pv. oryzae (strain MAFF 311018).